Here is a 407-residue protein sequence, read N- to C-terminus: Protein ZNF365 (407 aa).

Position 16 is a phosphoserine (S16). A C2H2-type; degenerate zinc finger spans residues 26-51 (FRCPRCGDHTRFRSLSSLRAHLEFSH). S138 is subject to Phosphoserine. The stretch at 169–296 (VEAVDRTIEK…KQLEYYQSQQ (128 aa)) forms a coiled coil. The residue at position 175 (T175) is a Phosphothreonine. A disordered region spans residues 347–392 (LKKAKDDRASMQPAKAIHEQAESSRDLCRPPKKGELLGFGRKGNIR). A compositionally biased stretch (basic and acidic residues) spans 362 to 381 (AIHEQAESSRDLCRPPKKGE). A Phosphoserine modification is found at S369.

In terms of assembly, homodimers. Interacts with NDE1 and NDEL1. Interacts with DISC1. Interacts with PARP1. Interacts with MCRS1.

It is found in the cytoplasm. It localises to the cytoskeleton. The protein localises to the microtubule organizing center. The protein resides in the centrosome. Involved in the regulation of neurogenesis. Negatively regulates neurite outgrowth. Involved in the morphogenesis of basket cells in the somatosensory cortex during embryogenesis. Involved in the positive regulation of oligodendrocyte differentiation during postnatal growth. Involved in dendritic arborization, morphogenesis of spine density dendrite, and establishment of postsynaptic dendrite density in cortical pyramidal neurons. Involved in homologous recombination (HR) repair pathway. Required for proper resolution of DNA double-strand breaks (DSBs) by HR. Is required for recovery of stalled replication forks, and directly contributes to genomic stability. Interacts with PARP1 and mediates MRE11-dependent DNA end resection during replication fork recovery. Contributes to genomic stability by preventing telomere dysfunction. The sequence is that of Protein ZNF365 (ZNF365) from Pongo abelii (Sumatran orangutan).